The sequence spans 404 residues: Cysteine desulfurase IscS (404 aa).

Pyridoxal 5'-phosphate-binding positions include 75–76 (AT), Asn155, Gln183, and 203–205 (SAH). Lys206 is subject to N6-(pyridoxal phosphate)lysine. Thr243 is a binding site for pyridoxal 5'-phosphate. Cys328 (cysteine persulfide intermediate) is an active-site residue. Residue Cys328 coordinates [2Fe-2S] cluster.

This sequence belongs to the class-V pyridoxal-phosphate-dependent aminotransferase family. NifS/IscS subfamily. In terms of assembly, homodimer. Forms a heterotetramer with IscU, interacts with other sulfur acceptors. Pyridoxal 5'-phosphate is required as a cofactor.

It localises to the cytoplasm. It carries out the reaction (sulfur carrier)-H + L-cysteine = (sulfur carrier)-SH + L-alanine. It participates in cofactor biosynthesis; iron-sulfur cluster biosynthesis. Its function is as follows. Master enzyme that delivers sulfur to a number of partners involved in Fe-S cluster assembly, tRNA modification or cofactor biosynthesis. Catalyzes the removal of elemental sulfur atoms from cysteine to produce alanine. Functions as a sulfur delivery protein for Fe-S cluster synthesis onto IscU, an Fe-S scaffold assembly protein, as well as other S acceptor proteins. This is Cysteine desulfurase IscS from Vibrio vulnificus (strain CMCP6).